The sequence spans 349 residues: NAC domain-containing protein JA2 (349 aa).

One can recognise an NAC domain in the interval 14-163 (LPPGFRFYPT…EWVLCRIYKK (150 aa)). The DNA-binding element occupies 111–169 (VGIKKALVFYVGKAPKGSKTNWIMHEYRLFESSRKNNGSSKLDEWVLCRIYKKNSSGPK). Residues 169–194 (KPLMSGLHSSNEYSHGSSTSSSSQFD) form a disordered region. Residues 177 to 191 (SSNEYSHGSSTSSSS) show a composition bias toward low complexity.

Expressed in guard cells of the epidermis.

It localises to the nucleus. Transcription factor involved in abscisic acid-mediated stomatal closure. Regulates the expression of NCED1, a gene involved in the biosynthesis of abscisic acid (ABA). Required for the stomatal closure induced by the bacterial pathogen Pseudomonas syringae pv tomato DC3000, but not for stomatal reopening. In Solanum lycopersicum (Tomato), this protein is NAC domain-containing protein JA2.